An 89-amino-acid polypeptide reads, in one-letter code: Small ribosomal subunit protein uS15 (89 aa).

This sequence belongs to the universal ribosomal protein uS15 family. As to quaternary structure, part of the 30S ribosomal subunit. Forms a bridge to the 50S subunit in the 70S ribosome, contacting the 23S rRNA.

Its function is as follows. One of the primary rRNA binding proteins, it binds directly to 16S rRNA where it helps nucleate assembly of the platform of the 30S subunit by binding and bridging several RNA helices of the 16S rRNA. Functionally, forms an intersubunit bridge (bridge B4) with the 23S rRNA of the 50S subunit in the ribosome. The polypeptide is Small ribosomal subunit protein uS15 (Haemophilus influenzae (strain 86-028NP)).